The chain runs to 245 residues: NAD(P)H-quinone oxidoreductase subunit K (245 aa).

[4Fe-4S] cluster is bound by residues Cys58, Cys59, Cys123, and Cys154.

This sequence belongs to the complex I 20 kDa subunit family. NDH-1 can be composed of about 15 different subunits; different subcomplexes with different compositions have been identified which probably have different functions. The cofactor is [4Fe-4S] cluster.

It is found in the cellular thylakoid membrane. The enzyme catalyses a plastoquinone + NADH + (n+1) H(+)(in) = a plastoquinol + NAD(+) + n H(+)(out). It carries out the reaction a plastoquinone + NADPH + (n+1) H(+)(in) = a plastoquinol + NADP(+) + n H(+)(out). NDH-1 shuttles electrons from an unknown electron donor, via FMN and iron-sulfur (Fe-S) centers, to quinones in the respiratory and/or the photosynthetic chain. The immediate electron acceptor for the enzyme in this species is believed to be plastoquinone. Couples the redox reaction to proton translocation, and thus conserves the redox energy in a proton gradient. Cyanobacterial NDH-1 also plays a role in inorganic carbon-concentration. This Nostoc sp. (strain PCC 7120 / SAG 25.82 / UTEX 2576) protein is NAD(P)H-quinone oxidoreductase subunit K.